The following is a 481-amino-acid chain: Abietadienol/abietadienal oxidase (481 aa).

A helical transmembrane segment spans residues 2 to 22; it reads ADQISLLLVVFTAAVALLHLI. Position 430 (Cys430) interacts with heme.

It belongs to the cytochrome P450 family. Requires heme as cofactor. Expressed in young tissues such as flushing buds and green bark tissues. Lower levels in mature needles and bark.

The protein resides in the membrane. The enzyme catalyses abieta-7,13-dien-18-ol + 2 reduced [NADPH--hemoprotein reductase] + 2 O2 = abieta-7,13-dien-18-oate + 2 oxidized [NADPH--hemoprotein reductase] + 3 H2O + 3 H(+). In terms of biological role, multifunctional and multisubstrate cytochrome P450 that oxidizes the respective carbon 18 of abietadienol, abietadienal, levopimaradienol, isopimara-7,15-dienol, isopimara-7,15-dienal, dehydroabietadienol, and dehydroabietadienal. This chain is Abietadienol/abietadienal oxidase (CYP720B1), found in Pinus taeda (Loblolly pine).